A 116-amino-acid chain; its full sequence is NADPH-dependent 7-cyano-7-deazaguanine reductase (116 aa).

The Thioimide intermediate role is filled by cysteine 31. Residue aspartate 38 is the Proton donor of the active site. Substrate-binding positions include 53–55 (VEL) and 72–73 (YE).

Belongs to the GTP cyclohydrolase I family. QueF type 1 subfamily.

Its subcellular location is the cytoplasm. It carries out the reaction 7-aminomethyl-7-carbaguanine + 2 NADP(+) = 7-cyano-7-deazaguanine + 2 NADPH + 3 H(+). It functions in the pathway tRNA modification; tRNA-queuosine biosynthesis. Functionally, catalyzes the NADPH-dependent reduction of 7-cyano-7-deazaguanine (preQ0) to 7-aminomethyl-7-deazaguanine (preQ1). The sequence is that of NADPH-dependent 7-cyano-7-deazaguanine reductase from Chlorobium phaeovibrioides (strain DSM 265 / 1930) (Prosthecochloris vibrioformis (strain DSM 265)).